A 153-amino-acid polypeptide reads, in one-letter code: MSTKIMLKSSDGKSFEIDEDVARKSIAINHMVEDGCATDVIPLRNVTSKILKIVIDYCEKHVKSKEEEDLKEWDADFMKTIETTILFDVMMAANYLNIQSLLDLTCKTVSDLLQADLLSGKTPDEIRAHFNIENDLTAEEVAKIREENQWAFQ.

Residues 90-153 (MMAANYLNIQ…IREENQWAFQ (64 aa)) form an interaction with the F-box domain of F-box proteins region.

Belongs to the SKP1 family. Part of a SCF (SKP1-cullin-F-box) protein ligase complex. Interacts with PP2A13. As to expression, restricted to inflorescences, especially in the inflorescence meristem (IM).

Its subcellular location is the nucleus. Its pathway is protein modification; protein ubiquitination. Its function is as follows. Involved in ubiquitination and subsequent proteasomal degradation of target proteins. Together with CUL1, RBX1 and a F-box protein, it forms a SCF E3 ubiquitin ligase complex. The functional specificity of this complex depends on the type of F-box protein. In the SCF complex, it serves as an adapter that links the F-box protein to CUL1. This is SKP1-like protein 5 (ASK5) from Arabidopsis thaliana (Mouse-ear cress).